A 753-amino-acid chain; its full sequence is Nigerose phosphorylase (753 aa).

348 to 349 (WD) lines the substrate pocket. Residue glutamate 490 is the Proton donor of the active site. Residue 604–605 (KQ) participates in substrate binding.

This sequence belongs to the glycosyl hydrolase 65 family. As to quaternary structure, homodimer.

It is found in the cytoplasm. The enzyme catalyses nigerose + phosphate = beta-D-glucose 1-phosphate + D-glucose. Does not require divalent metal ions. Its function is as follows. Catalyzes the reversible phosphorolysis of nigerose. Also shows a weak activity on kojibiose. The chain is Nigerose phosphorylase from Lachnoclostridium phytofermentans (strain ATCC 700394 / DSM 18823 / ISDg) (Clostridium phytofermentans).